We begin with the raw amino-acid sequence, 137 residues long: Ribosome-binding factor A (137 aa).

This sequence belongs to the RbfA family. As to quaternary structure, monomer. Binds 30S ribosomal subunits, but not 50S ribosomal subunits or 70S ribosomes.

It localises to the cytoplasm. In terms of biological role, one of several proteins that assist in the late maturation steps of the functional core of the 30S ribosomal subunit. Associates with free 30S ribosomal subunits (but not with 30S subunits that are part of 70S ribosomes or polysomes). Required for efficient processing of 16S rRNA. May interact with the 5'-terminal helix region of 16S rRNA. The protein is Ribosome-binding factor A of Rhodopseudomonas palustris (strain TIE-1).